The following is a 536-amino-acid chain: MMSGGPSDATHRKRRRRRGPKGSGVDGPSIPRAVTTNGAGPEEEEVVEGKAMELDAGMSAAEVGGVVGSHLSETRFDQCPVSPLSLKAIKDAGYEKMTQVQEATLPIILQGEDVLAKAKTGTGKTVAFLLPAIELLSTLPRSPSINLLVICPTRELANQVAAEARKLLKYHRSLGVQVVIGGTKLPQEQRSMQSNPCQILVATPGRLKDHLENTPGFSNRIKGVKVLVLDEADRLLDMGFRRDIEKIIAFIPKERQTLLFSATVPEEVRQISHIAMKRGYKFINTVKEGDEETHSQVSQMYMVAPLDLHFSILYNVLKKHIAEDADYKVIVFCTTAMVTKLVAEVLSQLKLNIREIHSRKSQSARTKVSDEFRKSKGLILVSSDVSARGVDYPDVTLVIQVGLPADREQYIHRLGRTGRKGKDGLGLLLLAPWETYFLNSVQDLSVSQAVVPTIDSSIQTGVKDALGRVETKSKESAYQAWLGYYNSNKAISRDKSRLVRLAEEFSQSMGLAIPPAIPKLILRKMGLNNVPGLRSV.

Residues 1-44 are disordered; the sequence is MMSGGPSDATHRKRRRRRGPKGSGVDGPSIPRAVTTNGAGPEEE. Basic residues predominate over residues 11–20; sequence HRKRRRRRGP. Residues 74-102 carry the Q motif motif; sequence TRFDQCPVSPLSLKAIKDAGYEKMTQVQE. The Helicase ATP-binding domain occupies 105-282; sequence LPIILQGEDV…HIAMKRGYKF (178 aa). An ATP-binding site is contributed by 118–125; it reads AKTGTGKT. Positions 230-233 match the DEAD box motif; the sequence is DEAD. The Helicase C-terminal domain maps to 316–466; sequence VLKKHIAEDA…SIQTGVKDAL (151 aa).

This sequence belongs to the DEAD box helicase family.

It carries out the reaction ATP + H2O = ADP + phosphate + H(+). This is DEAD-box ATP-dependent RNA helicase 26 from Oryza sativa subsp. japonica (Rice).